The following is a 348-amino-acid chain: tRNA N6-adenosine threonylcarbamoyltransferase (348 aa).

Fe cation contacts are provided by histidine 116 and histidine 120. Residues 138–142 (IISGG), aspartate 171, glycine 184, and asparagine 282 contribute to the substrate site. Aspartate 310 is a Fe cation binding site.

The protein belongs to the KAE1 / TsaD family. The cofactor is Fe(2+).

It localises to the cytoplasm. The enzyme catalyses L-threonylcarbamoyladenylate + adenosine(37) in tRNA = N(6)-L-threonylcarbamoyladenosine(37) in tRNA + AMP + H(+). Its function is as follows. Required for the formation of a threonylcarbamoyl group on adenosine at position 37 (t(6)A37) in tRNAs that read codons beginning with adenine. Is involved in the transfer of the threonylcarbamoyl moiety of threonylcarbamoyl-AMP (TC-AMP) to the N6 group of A37, together with TsaE and TsaB. TsaD likely plays a direct catalytic role in this reaction. This Ehrlichia ruminantium (strain Gardel) protein is tRNA N6-adenosine threonylcarbamoyltransferase.